We begin with the raw amino-acid sequence, 304 residues long: Oxygen-dependent coproporphyrinogen-III oxidase (304 aa).

Substrate is bound at residue Ser93. 2 residues coordinate a divalent metal cation: His97 and His107. His107 functions as the Proton donor in the catalytic mechanism. Residue 109-111 (NVR) coordinates substrate. His146 and His176 together coordinate a divalent metal cation. The segment at 241–276 (YVEFNLVYDRGTLFGLQSGGRTESILMSLPPQVRWG) is important for dimerization. 259–261 (GGR) contributes to the substrate binding site.

The protein belongs to the aerobic coproporphyrinogen-III oxidase family. As to quaternary structure, homodimer. A divalent metal cation serves as cofactor.

It localises to the cytoplasm. The enzyme catalyses coproporphyrinogen III + O2 + 2 H(+) = protoporphyrinogen IX + 2 CO2 + 2 H2O. The protein operates within porphyrin-containing compound metabolism; protoporphyrin-IX biosynthesis; protoporphyrinogen-IX from coproporphyrinogen-III (O2 route): step 1/1. Its function is as follows. Involved in the heme biosynthesis. Catalyzes the aerobic oxidative decarboxylation of propionate groups of rings A and B of coproporphyrinogen-III to yield the vinyl groups in protoporphyrinogen-IX. The sequence is that of Oxygen-dependent coproporphyrinogen-III oxidase from Pseudomonas syringae pv. tomato (strain ATCC BAA-871 / DC3000).